Here is a 148-residue protein sequence, read N- to C-terminus: MKARNKRLMLVGGGIALLVAAAALVLSAFQQNLVFFHTPSEVAEGKAPVGKTFRVGGMVETGSIQRDADGVTVRFVITDTAKVIPVSYRGSLPDLFKEGKGAVVQGTLGADGQFRATEVLAKHDENYMPPEAAHALEQAHKTATTVQQ.

The Cytoplasmic portion of the chain corresponds to 1-7; it reads MKARNKR. Residues 8 to 28 traverse the membrane as a helical; Signal-anchor for type II membrane protein segment; sequence LMLVGGGIALLVAAAALVLSA. The Periplasmic segment spans residues 29–148; that stretch reads FQQNLVFFHT…AHKTATTVQQ (120 aa). Positions 123 and 127 each coordinate heme.

This sequence belongs to the CcmE/CycJ family.

The protein resides in the cell inner membrane. Heme chaperone required for the biogenesis of c-type cytochromes. Transiently binds heme delivered by CcmC and transfers the heme to apo-cytochromes in a process facilitated by CcmF and CcmH. In Azoarcus sp. (strain BH72), this protein is Cytochrome c-type biogenesis protein CcmE.